A 155-amino-acid polypeptide reads, in one-letter code: Transcriptional repressor NrdR (155 aa).

A zinc finger lies at 3–34 (CPYCGHLEDRVVDSRETQDGQATRRRRACLSC). An ATP-cone domain is found at 49–139 (PQVVKKDGRR…VYRAFRDVGE (91 aa)).

It belongs to the NrdR family. It depends on Zn(2+) as a cofactor.

In terms of biological role, negatively regulates transcription of bacterial ribonucleotide reductase nrd genes and operons by binding to NrdR-boxes. This is Transcriptional repressor NrdR from Anaeromyxobacter dehalogenans (strain 2CP-1 / ATCC BAA-258).